Here is a 278-residue protein sequence, read N- to C-terminus: HTH-type transcriptional activator RhaS (278 aa).

The 99-residue stretch at 174-272 (NQLMAWLEDH…NWSPRDIRQG (99 aa)) folds into the HTH araC/xylS-type domain. DNA-binding regions (H-T-H motif) lie at residues 191 to 212 (EAVA…KQHT) and 239 to 262 (VTEI…RREF).

Binds DNA as a dimer.

Its subcellular location is the cytoplasm. Functionally, activates expression of the rhaBAD and rhaT operons. In Salmonella dublin (strain CT_02021853), this protein is HTH-type transcriptional activator RhaS.